A 189-amino-acid chain; its full sequence is Crossover junction endodeoxyribonuclease RuvC (189 aa).

Residues aspartate 7, glutamate 68, and aspartate 141 contribute to the active site. Mg(2+) contacts are provided by aspartate 7, glutamate 68, and aspartate 141.

It belongs to the RuvC family. In terms of assembly, homodimer which binds Holliday junction (HJ) DNA. The HJ becomes 2-fold symmetrical on binding to RuvC with unstacked arms; it has a different conformation from HJ DNA in complex with RuvA. In the full resolvosome a probable DNA-RuvA(4)-RuvB(12)-RuvC(2) complex forms which resolves the HJ. The cofactor is Mg(2+).

It localises to the cytoplasm. It catalyses the reaction Endonucleolytic cleavage at a junction such as a reciprocal single-stranded crossover between two homologous DNA duplexes (Holliday junction).. Its function is as follows. The RuvA-RuvB-RuvC complex processes Holliday junction (HJ) DNA during genetic recombination and DNA repair. Endonuclease that resolves HJ intermediates. Cleaves cruciform DNA by making single-stranded nicks across the HJ at symmetrical positions within the homologous arms, yielding a 5'-phosphate and a 3'-hydroxyl group; requires a central core of homology in the junction. The consensus cleavage sequence is 5'-(A/T)TT(C/G)-3'. Cleavage occurs on the 3'-side of the TT dinucleotide at the point of strand exchange. HJ branch migration catalyzed by RuvA-RuvB allows RuvC to scan DNA until it finds its consensus sequence, where it cleaves and resolves the cruciform DNA. This Chlorobium phaeovibrioides (strain DSM 265 / 1930) (Prosthecochloris vibrioformis (strain DSM 265)) protein is Crossover junction endodeoxyribonuclease RuvC.